The sequence spans 881 residues: MQHTTCTEDRIYHALERCLHGLSRDAVSSRWAAGLCLNCWSLQELVSRDAGNYLILVEKILGKAREVQEKCDYDLVMPLALLFYYAVLYAPHIPPDSELLLKAASIYHSFLTWPVPYCDVFRELLTFISDELKAPGISFQRLVRTEQGLPVKNYQSSTVTVLLLNRSEVQSEFLSIAEKLSSTEPPRHATLVLLLEHLYQVTFGTRCDLGSLHHLLKAKTLEELSEIYTSAAEAQEIAAASSDPVLARERLQSALRDIAGAAALPTIAGDAQPRRLQPIPIPTSRCYTYSWDQDNFDVLNDVLSKECSVVEPVASENEEDEEEEEEDVETDGCSPERDSLLSPISSISKDSVYSALSEDGPKHSCVSLFSSSKDSISELTVVSKKSLRSFVSSLKDCMDSGYAEDSDESSLDTLGRPELKVEKTHHKYRHTLTNKIYKLFKSKSQLVLRRDLKDCVDTGSLPLRRAESLCHPQAKPRIPARSRRAHSLPQHGLGQKLQTPQTPQLLSLPRRPFLSYDEDAKVATMRVVVFGSDRISGKVARAYSNLRLKESTCPTLTRYFKLQFFYVPVKRSCLLPAALLMHPPPSPSDLQLRALAQAEPTLAGAESSTNDISHYIGMLDPWYERNVLGLMNLPMDVLCQSAKPEAEPQEDSREQLPILADMILYYCRFATRPVLLQLYQTELTFIGGEKMTEVFIHSLELGHSAATRAIKASGPGSKRLGIDGDREAIPLTLQIAYSKTAISGRSQWNDVEKVCTSVNLSKACKKYEELASKTECLNLTMTEVVKRQNSKSKKSFNQLSVSQIKVDKVQIIGVQSSFAVCLDQDEQKILQSVTRCEISVCYRPRDSDPLALRRSSLTPQDPSEFHSLLCLPISTFSGALP.

The interval 23–99 is heterodimerization; sequence SRDAVSSRWA…APHIPPDSEL (77 aa). 2 disordered regions span residues 312–339 and 472–499; these read PVAS…ERDS and PQAK…KLQT. A compositionally biased stretch (acidic residues) spans 316–330; it reads ENEEDEEEEEEDVET. Residues 657-757 form an interaction with G beta gamma proteins region; it reads PILADMILYY…WNDVEKVCTS (101 aa).

Heterodimer. Interacts with a catalytic subunit and with G beta gamma proteins.

The protein resides in the nucleus. The protein localises to the cytoplasm. Its subcellular location is the cell membrane. With respect to regulation, greatly activated by G gamma proteins. Its function is as follows. Regulatory subunit of the PI3K gamma complex. This Gallus gallus (Chicken) protein is Phosphoinositide 3-kinase regulatory subunit 5 (PIK3R5).